The sequence spans 429 residues: CinA-like protein (429 aa).

It belongs to the CinA family.

This Prochlorococcus marinus (strain MIT 9313) protein is CinA-like protein.